Consider the following 242-residue polypeptide: Probable transcriptional regulatory protein Bphyt_1301 (242 aa).

The protein belongs to the TACO1 family.

Its subcellular location is the cytoplasm. This Paraburkholderia phytofirmans (strain DSM 17436 / LMG 22146 / PsJN) (Burkholderia phytofirmans) protein is Probable transcriptional regulatory protein Bphyt_1301.